Here is a 377-residue protein sequence, read N- to C-terminus: UPF0754 membrane protein BPUM_0927 (377 aa).

Transmembrane regions (helical) follow at residues 1 to 21 and 357 to 377; these read MNIF…GAAT and FLGG…VTLF.

It belongs to the UPF0754 family.

The protein resides in the cell membrane. This chain is UPF0754 membrane protein BPUM_0927, found in Bacillus pumilus (strain SAFR-032).